The sequence spans 311 residues: HTH-type transcriptional regulator DsdC (311 aa).

An HTH lysR-type domain is found at 15–72 (WQLSKMHTFEVAARHQSFALAAEELSLSPSAVSHRINQLEEELGIQLFVRSHRKVELT). The H-T-H motif DNA-binding region spans 32-51 (FALAAEELSLSPSAVSHRIN).

Belongs to the LysR transcriptional regulatory family.

Its function is as follows. Regulates the expression of the dsdX-dsdA operon. In Escherichia coli (strain K12), this protein is HTH-type transcriptional regulator DsdC.